The chain runs to 416 residues: Enolase (416 aa).

Glutamine 160 serves as a coordination point for (2R)-2-phosphoglycerate. The active-site Proton donor is the glutamate 204. Mg(2+) is bound by residues aspartate 239, glutamate 280, and aspartate 306. Positions 331, 360, 361, and 382 each coordinate (2R)-2-phosphoglycerate. Lysine 331 acts as the Proton acceptor in catalysis.

This sequence belongs to the enolase family. Requires Mg(2+) as cofactor.

The protein resides in the cytoplasm. It is found in the secreted. Its subcellular location is the cell surface. It catalyses the reaction (2R)-2-phosphoglycerate = phosphoenolpyruvate + H2O. It functions in the pathway carbohydrate degradation; glycolysis; pyruvate from D-glyceraldehyde 3-phosphate: step 4/5. Functionally, catalyzes the reversible conversion of 2-phosphoglycerate (2-PG) into phosphoenolpyruvate (PEP). It is essential for the degradation of carbohydrates via glycolysis. The protein is Enolase of Sulfolobus acidocaldarius (strain ATCC 33909 / DSM 639 / JCM 8929 / NBRC 15157 / NCIMB 11770).